The following is a 643-amino-acid chain: Transmembrane 9 superfamily member 4 (643 aa).

A signal peptide spans 1–23 (MAAAMIWWPRFLLLLCLTCKGST). Over 24-282 (FYVPGVAPIN…TMSDVQIHWF (259 aa)) the chain is Extracellular. The helical transmembrane segment at 283 to 303 (SIINSVVVVFFLSGILSMIII) threads the bilayer. Over 304 to 347 (RTLRKDIANYNKEDDIEDTMEESGWKLVHGDVFRPPQYPMILSS) the chain is Cytoplasmic. Phosphotyrosine is present on Y313. The chain crosses the membrane as a helical span at residues 348-368 (LLGSGIQLFCMILIVIFVAML). Over 369–377 (GMLSPSSRG) the chain is Extracellular. A helical membrane pass occupies residues 378–398 (ALMTTACFLFMFMGVFGGFSA). Residues 399-417 (GRLYRTLKGHRWKKGAFCT) are Cytoplasmic-facing. A helical membrane pass occupies residues 418–438 (ATLYPGVVFGICFVLNCFIWG). Topologically, residues 439-450 (KHSSGAVPFPTM) are extracellular. A helical membrane pass occupies residues 451 to 471 (VALLCMWFGISLPLVYLGYYF). The Cytoplasmic segment spans residues 472-502 (GFRKQPYDNPVRTNQIPRQIPEQRWYMNRFV). The helical transmembrane segment at 503–523 (GILMAGILPFGAMFIELFFIF) threads the bilayer. Topologically, residues 524–536 (SAIWENQFYYLFG) are extracellular. A helical membrane pass occupies residues 537–557 (FLFLVFIILVVSCSQISIVMV). Residues 558 to 571 (YFQLCAEDYRWWWR) lie on the Cytoplasmic side of the membrane. The helical transmembrane segment at 572 to 592 (NFLVSGGSAFYVLVYAIFYFV) threads the bilayer. The Extracellular portion of the chain corresponds to 593 to 599 (NKLDIVE). Residues 600 to 620 (FIPSLLYFGYTTLMVLSFWLL) form a helical membrane-spanning segment. At 621–643 (TGTIGFYAAYMFVRKIYAAVKID) the chain is on the cytoplasmic side.

The protein belongs to the nonaspanin (TM9SF) (TC 9.A.2) family.

It is found in the membrane. The protein localises to the golgi apparatus. Its subcellular location is the early endosome. Functionally, associates with proteins harboring glycine-rich transmembrane domains and ensures their efficient localization to the cell surface. The sequence is that of Transmembrane 9 superfamily member 4 (Tm9sf4) from Rattus norvegicus (Rat).